The sequence spans 287 residues: Casein kinase II subunit beta-1 (287 aa).

The segment at 1–97 is disordered; the sequence is MYRDRGTVNS…ESDVSGSDGE (97 aa). The span at 13–25 shows a compositional bias: basic and acidic residues; the sequence is EVVDRKRINDALE. Positions 41–50 are enriched in low complexity; the sequence is GTVTAATTTA. Residues 78–97 are compositionally biased toward acidic residues; the sequence is SDDESDTDSEESDVSGSDGE.

It belongs to the casein kinase 2 subunit beta family. As to quaternary structure, heterotetramer of two catalytic alpha subunits and two regulatory beta subunits. Interacts with CCA1. Interacts with LHY. Post-translationally, phosphorylated by alpha subunit.

Its subcellular location is the cytoplasm. The protein resides in the cytosol. It localises to the nucleus. In terms of biological role, plays a complex role in regulating the basal catalytic activity of the alpha subunit. The tetrameric holoenzyme CK2, composed of two alpha and two beta subunits, phosphorylates the transcription factor GBFl, resulting in stimulation of its DNA binding activity. CK2 phosphorylates the transcription factor PIF1 after an exposure to light, resulting in a proteasome-dependent degradation of PIF1 and promotion of photomorphogenesis. CK2 phosphorylates translation initiation factors. May participate in the regulation of the initiation of translation. Stimulates the binding of CCA1 to promoters. The polypeptide is Casein kinase II subunit beta-1 (CKB1) (Arabidopsis thaliana (Mouse-ear cress)).